Here is a 320-residue protein sequence, read N- to C-terminus: Cytochrome f (320 aa).

Positions 1 to 35 (MQNRNFNNLIIKWAIRLISIMIIINTIFWSSISEA) are cleaved as a signal peptide. Residues Phe36, Cys56, Cys59, and His60 each contribute to the heme site. The chain crosses the membrane as a helical span at residues 286-305 (IQGLLLFFGSVILAQIFLVL).

Belongs to the cytochrome f family. In terms of assembly, the 4 large subunits of the cytochrome b6-f complex are cytochrome b6, subunit IV (17 kDa polypeptide, petD), cytochrome f and the Rieske protein, while the 4 small subunits are PetG, PetL, PetM and PetN. The complex functions as a dimer. Requires heme as cofactor.

It is found in the plastid. Its subcellular location is the chloroplast thylakoid membrane. Functionally, component of the cytochrome b6-f complex, which mediates electron transfer between photosystem II (PSII) and photosystem I (PSI), cyclic electron flow around PSI, and state transitions. The sequence is that of Cytochrome f (petA) from Marchantia polymorpha (Common liverwort).